The primary structure comprises 212 residues: Ribonuclease HII (212 aa).

Residues 1–205 enclose the RNase H type-2 domain; sequence MTICGVDEAG…VQDILDRASQ (205 aa). Residues aspartate 7, glutamate 8, and aspartate 100 each contribute to the a divalent metal cation site.

It belongs to the RNase HII family. Mn(2+) is required as a cofactor. It depends on Mg(2+) as a cofactor.

It localises to the cytoplasm. It catalyses the reaction Endonucleolytic cleavage to 5'-phosphomonoester.. Endonuclease that specifically degrades the RNA of RNA-DNA hybrids. The polypeptide is Ribonuclease HII (Methanocorpusculum labreanum (strain ATCC 43576 / DSM 4855 / Z)).